Consider the following 545-residue polypeptide: Zinc finger protein 697 (545 aa).

Residues 1 to 143 (MKQEDNQGVC…EQPAPPVLPW (143 aa)) are disordered. Lys2 participates in a covalent cross-link: Glycyl lysine isopeptide (Lys-Gly) (interchain with G-Cter in SUMO2). A compositionally biased stretch (acidic residues) spans 23-36 (DFEDSEDREGDPEE). The segment covering 45–55 (DTNKREGHPEP) has biased composition (basic and acidic residues). Composition is skewed to acidic residues over residues 79-94 (LSEEEGVSVRGEEDDQ) and 118-135 (EDDDESAGENRLEEEEEQ). 11 C2H2-type zinc fingers span residues 189-211 (TICPDCGESFSPGAAFLQHQRIH), 261-283 (FRCGECGKGFSRNTYLTNHLRLH), 289-311 (NLCADCGKSFSWRADLLKHRRLH), 317-339 (YPCPECGEAFSLSSHLLSHRRAH), 353-375 (FACGECGKGFVRRSHLANHQRIH), 381-403 (HGCGECGKRFSWRSDLVKHQRVH), 409-431 (YMCSECGETFSVSSHLFTHKRTH), 437-459 (YVCRECGKGFGRNSHLVNHLRVH), 465-487 (FRCGQCEKRFSDFSTLTQHQRTH), 493-515 (YTCIECGKSFIQSSHLIRHRRIH), and 521-543 (HKCAGCGKGFRYKTHLAQHQKLH).

Belongs to the krueppel C2H2-type zinc-finger protein family.

Its subcellular location is the nucleus. Functionally, RNA-interacting protein with a high number of miRNA targets. Acts as a damage-induced regulator of muscle remodeling by mediating the interferon gamma response in muscle cells. The polypeptide is Zinc finger protein 697 (Homo sapiens (Human)).